The primary structure comprises 114 residues: UPF0145 protein STK_10800 (114 aa).

The protein belongs to the UPF0145 family.

This chain is UPF0145 protein STK_10800, found in Sulfurisphaera tokodaii (strain DSM 16993 / JCM 10545 / NBRC 100140 / 7) (Sulfolobus tokodaii).